Reading from the N-terminus, the 81-residue chain is Photosystem I iron-sulfur center (81 aa).

2 4Fe-4S ferredoxin-type domains span residues 2–31 and 39–68; these read AHSV…MIPW and IASA…VRVY. Residues Cys11, Cys14, Cys17, Cys21, Cys48, Cys51, Cys54, and Cys58 each coordinate [4Fe-4S] cluster.

In terms of assembly, the eukaryotic PSI reaction center is composed of at least 11 subunits. The cofactor is [4Fe-4S] cluster.

The protein localises to the plastid. It localises to the chloroplast thylakoid membrane. The enzyme catalyses reduced [plastocyanin] + hnu + oxidized [2Fe-2S]-[ferredoxin] = oxidized [plastocyanin] + reduced [2Fe-2S]-[ferredoxin]. In terms of biological role, apoprotein for the two 4Fe-4S centers FA and FB of photosystem I (PSI); essential for photochemical activity. FB is the terminal electron acceptor of PSI, donating electrons to ferredoxin. The C-terminus interacts with PsaA/B/D and helps assemble the protein into the PSI complex. Required for binding of PsaD and PsaE to PSI. PSI is a plastocyanin-ferredoxin oxidoreductase, converting photonic excitation into a charge separation, which transfers an electron from the donor P700 chlorophyll pair to the spectroscopically characterized acceptors A0, A1, FX, FA and FB in turn. This chain is Photosystem I iron-sulfur center, found in Pinus thunbergii (Japanese black pine).